The following is a 21-amino-acid chain: Chlorophyllase type 2 (21 aa).

This sequence belongs to the AB hydrolase superfamily. Lipase family.

It carries out the reaction a chlorophyll + H2O = a chlorophyllide + phytol + H(+). It participates in porphyrin-containing compound metabolism; chlorophyll degradation. In terms of biological role, catalyzes the hydrolysis of ester bond in chlorophyll to yield chlorophyllide and phytol. The sequence is that of Chlorophyllase type 2 from Chenopodium album (Fat hen).